The sequence spans 232 residues: Large ribosomal subunit protein uL1 (232 aa).

Belongs to the universal ribosomal protein uL1 family. As to quaternary structure, part of the 50S ribosomal subunit.

Its function is as follows. Binds directly to 23S rRNA. The L1 stalk is quite mobile in the ribosome, and is involved in E site tRNA release. In terms of biological role, protein L1 is also a translational repressor protein, it controls the translation of the L11 operon by binding to its mRNA. This is Large ribosomal subunit protein uL1 from Sinorhizobium medicae (strain WSM419) (Ensifer medicae).